Consider the following 480-residue polypeptide: Ribosomal RNA small subunit methyltransferase F (480 aa).

S-adenosyl-L-methionine-binding positions include 126–132, glutamate 150, aspartate 177, and aspartate 195; that span reads AAAPGSK. The Nucleophile role is filled by cysteine 248.

It belongs to the class I-like SAM-binding methyltransferase superfamily. RsmB/NOP family.

The protein localises to the cytoplasm. The catalysed reaction is cytidine(1407) in 16S rRNA + S-adenosyl-L-methionine = 5-methylcytidine(1407) in 16S rRNA + S-adenosyl-L-homocysteine + H(+). Functionally, specifically methylates the cytosine at position 1407 (m5C1407) of 16S rRNA. The sequence is that of Ribosomal RNA small subunit methyltransferase F from Cronobacter sakazakii (strain ATCC BAA-894) (Enterobacter sakazakii).